The following is a 400-amino-acid chain: Homoserine O-acetyltransferase (400 aa).

Residues 64 to 373 enclose the AB hydrolase-1 domain; it reads NAILICHALT…TDRGHDAFLL (310 aa). Residue Ser169 is the Nucleophile of the active site. Arg239 provides a ligand contact to substrate. Catalysis depends on residues Asp335 and His368. Asp369 is a binding site for substrate.

Belongs to the AB hydrolase superfamily. MetX family. Homodimer.

The protein resides in the cytoplasm. The catalysed reaction is L-homoserine + acetyl-CoA = O-acetyl-L-homoserine + CoA. The protein operates within amino-acid biosynthesis; L-methionine biosynthesis via de novo pathway; O-acetyl-L-homoserine from L-homoserine: step 1/1. Its function is as follows. Transfers an acetyl group from acetyl-CoA to L-homoserine, forming acetyl-L-homoserine. The protein is Homoserine O-acetyltransferase of Bradyrhizobium diazoefficiens (strain JCM 10833 / BCRC 13528 / IAM 13628 / NBRC 14792 / USDA 110).